A 733-amino-acid chain; its full sequence is Catalase-peroxidase (733 aa).

The tract at residues 1-25 (MNEERKCPITGATHKPSAEKGRSNH) is disordered. Over residues 16–25 (PSAEKGRSNH) the composition is skewed to basic and acidic residues. Positions 96 to 219 (WHSAGTYRTS…LAAVQMGLIY (124 aa)) form a cross-link, tryptophyl-tyrosyl-methioninium (Trp-Tyr) (with M-245). His-97 serves as the catalytic Proton acceptor. The tryptophyl-tyrosyl-methioninium (Tyr-Met) (with W-96) cross-link spans 219 to 245 (YVNPEGPNGKPDPLAAAKDIRETFARM). Residue His-260 participates in heme b binding.

This sequence belongs to the peroxidase family. Peroxidase/catalase subfamily. Homodimer or homotetramer. Requires heme b as cofactor. In terms of processing, formation of the three residue Trp-Tyr-Met cross-link is important for the catalase, but not the peroxidase activity of the enzyme.

The enzyme catalyses H2O2 + AH2 = A + 2 H2O. The catalysed reaction is 2 H2O2 = O2 + 2 H2O. In terms of biological role, bifunctional enzyme with both catalase and broad-spectrum peroxidase activity. This chain is Catalase-peroxidase, found in Chlorobium chlorochromatii (strain CaD3).